The sequence spans 185 residues: Ribosome-recycling factor (185 aa).

Residues Arg-143–Ser-163 are disordered.

This sequence belongs to the RRF family.

Its subcellular location is the cytoplasm. Functionally, responsible for the release of ribosomes from messenger RNA at the termination of protein biosynthesis. May increase the efficiency of translation by recycling ribosomes from one round of translation to another. This chain is Ribosome-recycling factor, found in Mycobacterium ulcerans (strain Agy99).